A 260-amino-acid chain; its full sequence is UPF0246 protein BamMC406_2140 (260 aa).

This sequence belongs to the UPF0246 family.

This chain is UPF0246 protein BamMC406_2140, found in Burkholderia ambifaria (strain MC40-6).